Here is a 458-residue protein sequence, read N- to C-terminus: (R)-6-hydroxynicotine oxidase (458 aa).

The FAD-binding PCMH-type domain maps to 33–204; the sequence is RHLQRPSLIA…TEVEVQLYEL (172 aa). Residues 67–73, 129–130, 134–137, Gly144, Thr195, Asn413, and Asn450 each bind FAD; these read RSGGHNP, HP, and FCGL. Position 71 is a pros-8alpha-FAD histidine (His71).

This sequence belongs to the oxygen-dependent FAD-linked oxidoreductase family. Monomer. Requires FAD as cofactor.

The protein resides in the cytoplasm. It catalyses the reaction (R)-6-hydroxynicotine + O2 + H2O = 6-hydroxypseudooxynicotine + H2O2. The enzyme catalyses (R)-6-hydroxynicotine + O2 = 6-hydroxy-N-methylmyosmine + H2O2. The protein operates within alkaloid degradation; nicotine degradation; 6-hydroxypseudooxynicotine from nicotine (R-isomer route): step 2/2. With respect to regulation, inhibited by (S)-6-hydroxynicotine. Inhibited by high concentrations of phenanthroline. Its function is as follows. Involved in the degradation of D-nicotine. Catalyzes the oxidation of (R)-6-hydroxynicotine (6-hydroxy-D-nicotine) to 6-hydroxypseudooxynicotine. Oxidation of the pyrrolidine ring of (R)-6-hydroxynicotine leads to the formation of the optically inactive 6-hydroxy-N-methylmyosmine, which hydrolyzes spontaneously to 6-hydroxypseudooxynicotine. Acts with absolute stereospecificity on the D-form of 6-hydroxynicotine. Shows lower activity with (R)-6-hydroxynornicotine, and weak activity with (R)-4-(1-methylpyrrolidine-2-yl)phenol, (R)-6-chloronicotine and (R)-nicotine. In Paenarthrobacter nicotinovorans (Arthrobacter nicotinovorans), this protein is (R)-6-hydroxynicotine oxidase.